A 392-amino-acid chain; its full sequence is 23S rRNA (uracil(747)-C(5))-methyltransferase RlmC (392 aa).

Residues cysteine 4, cysteine 12, cysteine 15, and cysteine 93 each contribute to the [4Fe-4S] cluster site. S-adenosyl-L-methionine-binding residues include glutamine 218, phenylalanine 247, glutamate 275, and asparagine 321. The active-site Nucleophile is the cysteine 348.

It belongs to the class I-like SAM-binding methyltransferase superfamily. RNA M5U methyltransferase family. RlmC subfamily.

The enzyme catalyses uridine(747) in 23S rRNA + S-adenosyl-L-methionine = 5-methyluridine(747) in 23S rRNA + S-adenosyl-L-homocysteine + H(+). Catalyzes the formation of 5-methyl-uridine at position 747 (m5U747) in 23S rRNA. This is 23S rRNA (uracil(747)-C(5))-methyltransferase RlmC from Haemophilus influenzae (strain PittGG).